A 434-amino-acid chain; its full sequence is Putative magnesium transporter MRS2-D (434 aa).

Disordered stretches follow at residues methionine 1–glutamate 21, alanine 126–alanine 171, and glutamate 279–glycine 311. Positions alanine 9–glutamate 21 are enriched in low complexity. Positions glutamate 279 to glutamate 291 are enriched in basic and acidic residues. 2 helical membrane passes run glycine 367–phenylalanine 387 and phenylalanine 405–leucine 425.

It belongs to the CorA metal ion transporter (MIT) (TC 1.A.35.5) family.

It localises to the membrane. Functionally, putative magnesium transporter. This is Putative magnesium transporter MRS2-D (MRS2-D) from Oryza sativa subsp. indica (Rice).